Here is a 367-residue protein sequence, read N- to C-terminus: Peptide chain release factor 1 (367 aa).

Glutamine 238 bears the N5-methylglutamine mark.

It belongs to the prokaryotic/mitochondrial release factor family. Methylated by PrmC. Methylation increases the termination efficiency of RF1.

It localises to the cytoplasm. In terms of biological role, peptide chain release factor 1 directs the termination of translation in response to the peptide chain termination codons UAG and UAA. This Dictyoglomus turgidum (strain DSM 6724 / Z-1310) protein is Peptide chain release factor 1.